We begin with the raw amino-acid sequence, 452 residues long: Phosphatidate cytidylyltransferase, mitochondrial (452 aa).

This sequence belongs to the TAM41 family. Mg(2+) is required as a cofactor.

It localises to the mitochondrion inner membrane. It catalyses the reaction a 1,2-diacyl-sn-glycero-3-phosphate + CTP + H(+) = a CDP-1,2-diacyl-sn-glycerol + diphosphate. It participates in phospholipid metabolism; CDP-diacylglycerol biosynthesis; CDP-diacylglycerol from sn-glycerol 3-phosphate: step 3/3. Its function is as follows. Catalyzes the conversion of phosphatidic acid (PA) to CDP-diacylglycerol (CDP-DAG), an essential intermediate in the synthesis of phosphatidylglycerol, cardiolipin and phosphatidylinositol. In Homo sapiens (Human), this protein is Phosphatidate cytidylyltransferase, mitochondrial (TAMM41).